The following is a 206-amino-acid chain: Small ribosomal subunit protein uS4c (206 aa).

The region spanning 93 to 161 (MRLDNIVYRL…IEKNIELLDK (69 aa)) is the S4 RNA-binding domain.

Belongs to the universal ribosomal protein uS4 family. As to quaternary structure, part of the 30S ribosomal subunit. Contacts protein S5. The interaction surface between S4 and S5 is involved in control of translational fidelity.

It is found in the plastid. One of the primary rRNA binding proteins, it binds directly to 16S rRNA where it nucleates assembly of the body of the 30S subunit. In terms of biological role, with S5 and S12 plays an important role in translational accuracy. In Euglena longa (Euglenophycean alga), this protein is Small ribosomal subunit protein uS4c (rps4).